We begin with the raw amino-acid sequence, 198 residues long: MICOS complex subunit MIC26 (198 aa).

The N-terminal stretch at 1–25 (MFKVIQRSVGPASLSLLTFKVYAAP) is a signal peptide. A helical transmembrane segment spans residues 108 to 128 (PGFFPRLGVIGFAGLIGLLLA). Ser162 is a glycosylation site (O-linked (Xyl...) (chondroitin sulfate) serine).

This sequence belongs to the apolipoprotein O/MICOS complex subunit Mic27 family. In terms of assembly, component of the mitochondrial contact site and cristae organizing system (MICOS) complex, composed of at least MICOS10/MIC10, CHCHD3/MIC19, CHCHD6/MIC25, APOOL/MIC27, IMMT/MIC60, APOO/MIC23/MIC26 and MICOS13/MIC13. This complex was also known under the names MINOS or MitOS complex. he MICOS complex associates with mitochondrial outer membrane proteins SAMM50, MTX1 and MTX2 (together described as components of the mitochondrial outer membrane sorting assembly machinery (SAM) complex) and DNAJC11, mitochondrial inner membrane protein TMEM11 and with HSPA9. The MICOS and SAM complexes together with DNAJC11 are part of a large protein complex spanning both membranes termed the mitochondrial intermembrane space bridging (MIB) complex. Interacts with IMMT/MIC60. Interacts with MICOS10/MIC10 and APOOL/MIC27. Post-translationally, O-glycosylation; glycosaminoglycan of chondroitin-sulfate type. In terms of tissue distribution, expressed in all tissues examined. Up-regulated in diabetic heart.

Its subcellular location is the mitochondrion inner membrane. It localises to the secreted. The protein resides in the mitochondrion. The protein localises to the golgi apparatus membrane. It is found in the endoplasmic reticulum membrane. Component of the MICOS complex, a large protein complex of the mitochondrial inner membrane that plays crucial roles in the maintenance of crista junctions, inner membrane architecture, and formation of contact sites to the outer membrane. Plays a crucial role in crista junction formation and mitochondrial function. Can promote cardiac lipotoxicity by enhancing mitochondrial respiration and fatty acid metabolism in cardiac myoblasts. Promotes cholesterol efflux from macrophage cells. Detected in HDL, LDL and VLDL. Secreted by a microsomal triglyceride transfer protein (MTTP)-dependent mechanism, probably as a VLDL-associated protein that is subsequently transferred to HDL. In Homo sapiens (Human), this protein is MICOS complex subunit MIC26 (APOO).